A 269-amino-acid chain; its full sequence is MISLSDLRKFKTEGRKFSCLTCYDASMAKAMEFAEIDSILIGDSLGMVIQGHDSTLPVTVDDMAYHTAAVRRGNQHSFIMTDLPFMSYATLPDALNNAKKVMQAGAQMIKIEGGAWLSESIRVLTQNGIPVCVHLGLTPQSVHVFGGYKLQAKTREAADQLIADCQAVVDAGAAILLLECVPAQLGQEIAELFPQTPVIGIGAGKETDGQVLVAQDMLGLSFGKVARFVRNFMKEQAGETAIVDAFKAYHAAVQDQSFPAREHTFQVEL.

2 residues coordinate Mg(2+): Asp43 and Asp82. 3-methyl-2-oxobutanoate is bound by residues 43–44 (DS), Asp82, and Lys110. Glu112 contacts Mg(2+). Catalysis depends on Glu179, which acts as the Proton acceptor.

It belongs to the PanB family. In terms of assembly, homodecamer; pentamer of dimers. The cofactor is Mg(2+).

Its subcellular location is the cytoplasm. It catalyses the reaction 3-methyl-2-oxobutanoate + (6R)-5,10-methylene-5,6,7,8-tetrahydrofolate + H2O = 2-dehydropantoate + (6S)-5,6,7,8-tetrahydrofolate. Its pathway is cofactor biosynthesis; (R)-pantothenate biosynthesis; (R)-pantoate from 3-methyl-2-oxobutanoate: step 1/2. Catalyzes the reversible reaction in which hydroxymethyl group from 5,10-methylenetetrahydrofolate is transferred onto alpha-ketoisovalerate to form ketopantoate. This is 3-methyl-2-oxobutanoate hydroxymethyltransferase from Acinetobacter baylyi (strain ATCC 33305 / BD413 / ADP1).